The sequence spans 295 residues: 4-hydroxy-tetrahydrodipicolinate synthase (295 aa).

Threonine 47 lines the pyruvate pocket. Tyrosine 135 functions as the Proton donor/acceptor in the catalytic mechanism. Lysine 163 functions as the Schiff-base intermediate with substrate in the catalytic mechanism. Pyruvate is bound at residue isoleucine 206.

This sequence belongs to the DapA family. As to quaternary structure, homodimer.

It is found in the cytoplasm. The catalysed reaction is L-aspartate 4-semialdehyde + pyruvate = (2S,4S)-4-hydroxy-2,3,4,5-tetrahydrodipicolinate + H2O + H(+). It functions in the pathway amino-acid biosynthesis; L-lysine biosynthesis via DAP pathway; (S)-tetrahydrodipicolinate from L-aspartate: step 3/4. In terms of biological role, catalyzes the condensation of (S)-aspartate-beta-semialdehyde [(S)-ASA] and pyruvate to 4-hydroxy-tetrahydrodipicolinate (HTPA). The polypeptide is 4-hydroxy-tetrahydrodipicolinate synthase (Staphylococcus aureus (strain Mu50 / ATCC 700699)).